A 705-amino-acid chain; its full sequence is 1,4-alpha-glucan branching enzyme GlgB (705 aa).

Asp-309 acts as the Nucleophile in catalysis. Glu-360 (proton donor) is an active-site residue. The disordered stretch occupies residues 654–705; the sequence is VQVERAADPRPNEQQRLVAETPAHEGGRSAPADAAESAEQKPDDEQKGGKKA. Over residues 691–705 the composition is skewed to basic and acidic residues; sequence AEQKPDDEQKGGKKA.

It belongs to the glycosyl hydrolase 13 family. GlgB subfamily. Monomer.

The enzyme catalyses Transfers a segment of a (1-&gt;4)-alpha-D-glucan chain to a primary hydroxy group in a similar glucan chain.. It functions in the pathway glycan biosynthesis; glycogen biosynthesis. Functionally, catalyzes the formation of the alpha-1,6-glucosidic linkages in glycogen by scission of a 1,4-alpha-linked oligosaccharide from growing alpha-1,4-glucan chains and the subsequent attachment of the oligosaccharide to the alpha-1,6 position. The chain is 1,4-alpha-glucan branching enzyme GlgB from Deinococcus radiodurans (strain ATCC 13939 / DSM 20539 / JCM 16871 / CCUG 27074 / LMG 4051 / NBRC 15346 / NCIMB 9279 / VKM B-1422 / R1).